Consider the following 505-residue polypeptide: RNA-splicing ligase RtcB homolog (505 aa).

Mn(2+) contacts are provided by Asp119, Cys122, His227, His259, and His353. Residue 226 to 230 (NHYAE) coordinates GMP. Residues 353 to 354 (HN), 402 to 405 (GGSM), Ser409, 428 to 431 (HGAG), and Lys504 each bind GMP. His428 functions as the GMP-histidine intermediate in the catalytic mechanism.

Belongs to the RtcB family. Catalytic component of the tRNA-splicing ligase complex. Mn(2+) is required as a cofactor.

The protein resides in the nucleus. The protein localises to the cytoplasm. The catalysed reaction is a 3'-end 3'-phospho-ribonucleotide-RNA + a 5'-end dephospho-ribonucleoside-RNA + GTP = a ribonucleotidyl-ribonucleotide-RNA + GMP + diphosphate. The enzyme catalyses a 3'-end 2',3'-cyclophospho-ribonucleotide-RNA + a 5'-end dephospho-ribonucleoside-RNA + GTP + H2O = a ribonucleotidyl-ribonucleotide-RNA + GMP + diphosphate + H(+). In terms of biological role, catalytic subunit of the tRNA-splicing ligase complex that acts by directly joining spliced tRNA halves to mature-sized tRNAs. Required for the ligation of mRNAs and specifically, regulates xbp-1 mRNA splicing during the endoplasmic reticulum stress-induced unfolded protein response. Has a neuroprotective role in the age-dependent degeneration of dopamine neurons, which is mediated by xbp-1. This chain is RNA-splicing ligase RtcB homolog, found in Caenorhabditis elegans.